The sequence spans 503 residues: Glycerol kinase (503 aa).

Thr-17 lines the ADP pocket. The ATP site is built by Thr-17, Thr-18, and Ser-19. Thr-17 provides a ligand contact to sn-glycerol 3-phosphate. Arg-21 contributes to the ADP binding site. Residues Arg-87, Glu-88, Tyr-141, and Asp-245 each contribute to the sn-glycerol 3-phosphate site. Positions 87, 88, 141, 245, and 246 each coordinate glycerol. Thr-267 and Gly-310 together coordinate ADP. 4 residues coordinate ATP: Thr-267, Gly-310, Gln-314, and Gly-411. Positions 411 and 415 each coordinate ADP.

The protein belongs to the FGGY kinase family.

The enzyme catalyses glycerol + ATP = sn-glycerol 3-phosphate + ADP + H(+). The protein operates within polyol metabolism; glycerol degradation via glycerol kinase pathway; sn-glycerol 3-phosphate from glycerol: step 1/1. Its activity is regulated as follows. Inhibited by fructose 1,6-bisphosphate (FBP). Functionally, key enzyme in the regulation of glycerol uptake and metabolism. Catalyzes the phosphorylation of glycerol to yield sn-glycerol 3-phosphate. This is Glycerol kinase from Pseudomonas tolaasii.